The following is a 365-amino-acid chain: DNA replication and repair protein RecF (365 aa).

ATP is bound at residue 30–37; sequence GDNGEGKT.

It belongs to the RecF family.

It is found in the cytoplasm. The RecF protein is involved in DNA metabolism; it is required for DNA replication and normal SOS inducibility. RecF binds preferentially to single-stranded, linear DNA. It also seems to bind ATP. The chain is DNA replication and repair protein RecF from Leptospira interrogans serogroup Icterohaemorrhagiae serovar copenhageni (strain Fiocruz L1-130).